The primary structure comprises 362 residues: Sulfoquinovose monooxygenase (362 aa).

It belongs to the SsuD family.

The enzyme catalyses 6-sulfo-D-quinovose + FMNH2 + O2 = 6-dehydro-D-glucose + FMN + sulfite + H2O + 2 H(+). In terms of biological role, part of the alkanesulfonate monooxygenase (sulfo-ASMO) pathway, a D-sulfoquinovose degradation pathway that enables the complete utilization of all carbons within sulfoquinovose (SQ) with concomitant production of inorganic sulfite. Catalyzes the oxidative desulfurization of sulfoquinovose to sulfite and 6-dehydro-D-glucose. The protein is Sulfoquinovose monooxygenase of Novosphingobium aromaticivorans (strain ATCC 700278 / DSM 12444 / CCUG 56034 / CIP 105152 / NBRC 16084 / F199).